The following is a 208-amino-acid chain: Imidazoleglycerol-phosphate dehydratase (208 aa).

The protein belongs to the imidazoleglycerol-phosphate dehydratase family.

It carries out the reaction D-erythro-1-(imidazol-4-yl)glycerol 3-phosphate = 3-(imidazol-4-yl)-2-oxopropyl phosphate + H2O. The protein operates within amino-acid biosynthesis; L-histidine biosynthesis; L-histidine from 5-phospho-alpha-D-ribose 1-diphosphate: step 6/9. This chain is Imidazoleglycerol-phosphate dehydratase (his3), found in Trichoderma harzianum (Hypocrea lixii).